A 229-amino-acid polypeptide reads, in one-letter code: 5'-methylthioadenosine/S-adenosylhomocysteine nucleosidase (229 aa).

The active-site Proton acceptor is Glu-12. Residues Gly-78, Met-152, and 173–174 each bind substrate; that span reads ME. The active-site Proton donor is Asp-197.

The protein belongs to the PNP/UDP phosphorylase family. MtnN subfamily.

The catalysed reaction is S-adenosyl-L-homocysteine + H2O = S-(5-deoxy-D-ribos-5-yl)-L-homocysteine + adenine. It catalyses the reaction S-methyl-5'-thioadenosine + H2O = 5-(methylsulfanyl)-D-ribose + adenine. The enzyme catalyses 5'-deoxyadenosine + H2O = 5-deoxy-D-ribose + adenine. It functions in the pathway amino-acid biosynthesis; L-methionine biosynthesis via salvage pathway; S-methyl-5-thio-alpha-D-ribose 1-phosphate from S-methyl-5'-thioadenosine (hydrolase route): step 1/2. Functionally, catalyzes the irreversible cleavage of the glycosidic bond in both 5'-methylthioadenosine (MTA) and S-adenosylhomocysteine (SAH/AdoHcy) to adenine and the corresponding thioribose, 5'-methylthioribose and S-ribosylhomocysteine, respectively. Also cleaves 5'-deoxyadenosine, a toxic by-product of radical S-adenosylmethionine (SAM) enzymes, into 5-deoxyribose and adenine. The sequence is that of 5'-methylthioadenosine/S-adenosylhomocysteine nucleosidase from Oceanobacillus iheyensis (strain DSM 14371 / CIP 107618 / JCM 11309 / KCTC 3954 / HTE831).